The primary structure comprises 202 residues: Protein phosphatase inhibitor 2 family member C (202 aa).

2 disordered regions span residues 1 to 51 (MSAS…DESS) and 71 to 118 (PGTS…EQES). Positions 12–17 (KGILKN) are required for binding PPP1CC. A compositionally biased stretch (low complexity) spans 19–35 (SSSGSSVATSGQQSGGT). The tract at residues 43–55 (KSQKWDESSILAA) is required for binding PPP1CC. Residues 71–80 (PGTSYMSVQD) show a composition bias toward polar residues. Over residues 84–112 (DSVRDVEGEDSVRGVEGKEATDASDHSCE) the composition is skewed to basic and acidic residues. The segment at 144 to 147 (HYNE) is required for binding PPP1CC catalytic center, displacing metal ions and inhibition of PPP1CC catalytic activity. The segment at 162–202 (LQSEDNENEETPQGTNEEKTAAEESEEAPLTGGLQTQSCDP) is disordered.

Belongs to the protein phosphatase inhibitor 2 family. In terms of tissue distribution, detected in sperm (at protein level).

Functionally, functions as a protein phosphatase inhibitor. It inhibits activity of the catalytic subunit of PP1 and weakly inhibits the activity of myosin-associated phosphates. In Homo sapiens (Human), this protein is Protein phosphatase inhibitor 2 family member C.